The primary structure comprises 128 residues: Sirohydrochlorin cobaltochelatase (128 aa).

His9 functions as the Proton acceptor in the catalytic mechanism. Position 9 (His9) interacts with Co(2+). Substrate is bound by residues Lys43 and 68-73 (FATGTH). A Co(2+)-binding site is contributed by His73.

Belongs to the CbiX family. CbiXS subfamily. In terms of assembly, homotetramer; dimer of dimers.

The enzyme catalyses Co-sirohydrochlorin + 2 H(+) = sirohydrochlorin + Co(2+). Its pathway is cofactor biosynthesis; adenosylcobalamin biosynthesis; cob(II)yrinate a,c-diamide from sirohydrochlorin (anaerobic route): step 1/10. Catalyzes the insertion of Co(2+) into sirohydrochlorin as part of the anaerobic pathway to cobalamin biosynthesis. The polypeptide is Sirohydrochlorin cobaltochelatase (Saccharolobus islandicus (strain Y.N.15.51 / Yellowstone #2) (Sulfolobus islandicus)).